A 144-amino-acid chain; its full sequence is Cell division protein SepF (144 aa).

Belongs to the SepF family. In terms of assembly, homodimer. Interacts with FtsZ.

Its subcellular location is the cytoplasm. Cell division protein that is part of the divisome complex and is recruited early to the Z-ring. Probably stimulates Z-ring formation, perhaps through the cross-linking of FtsZ protofilaments. Its function overlaps with FtsA. The protein is Cell division protein SepF of Geobacillus sp. (strain WCH70).